The sequence spans 619 residues: Nucleolar GTP-binding protein 2 (619 aa).

Positions 1–10 (MGTGKKEKSR) are enriched in basic and acidic residues. The disordered stretch occupies residues 1-24 (MGTGKKEKSRIQRQGKVTGDPKVK). One can recognise a CP-type G domain in the interval 222–383 (WNELYKVIDS…LIDCPGIVPP (162 aa)). GTP-binding positions include 332–339 (GYPNVGKS) and 376–380 (DCPGI). Positions 473–619 (PWFTPAPEKE…PPKKQRRSRK (147 aa)) are disordered. The span at 489–500 (MEGREGRYGEMS) shows a compositional bias: basic and acidic residues. Residues 536-546 (SDSDSEVEEAA) show a composition bias toward acidic residues. Basic and acidic residues predominate over residues 547 to 556 (EEKGEEKSTA). Residues 565-603 (SSDEEEDGEEEGSDVEDDEEGSDLDIEGASELEESESEA) are compositionally biased toward acidic residues.

It belongs to the TRAFAC class YlqF/YawG GTPase family. NOG2 subfamily.

The protein resides in the nucleus. It is found in the nucleolus. GTPase that associates with pre-60S ribosomal subunits in the nucleolus and is required for their nuclear export and maturation. This is Nucleolar GTP-binding protein 2 (nog-2) from Neurospora crassa (strain ATCC 24698 / 74-OR23-1A / CBS 708.71 / DSM 1257 / FGSC 987).